The primary structure comprises 137 residues: Putative pre-16S rRNA nuclease (137 aa).

This sequence belongs to the YqgF nuclease family.

The protein localises to the cytoplasm. In terms of biological role, could be a nuclease involved in processing of the 5'-end of pre-16S rRNA. The chain is Putative pre-16S rRNA nuclease from Actinobacillus pleuropneumoniae serotype 5b (strain L20).